Consider the following 245-residue polypeptide: 1-(5-phosphoribosyl)-5-[(5-phosphoribosylamino)methylideneamino] imidazole-4-carboxamide isomerase (245 aa).

Asp8 functions as the Proton acceptor in the catalytic mechanism. Catalysis depends on Asp130, which acts as the Proton donor.

This sequence belongs to the HisA/HisF family.

The protein localises to the cytoplasm. The catalysed reaction is 1-(5-phospho-beta-D-ribosyl)-5-[(5-phospho-beta-D-ribosylamino)methylideneamino]imidazole-4-carboxamide = 5-[(5-phospho-1-deoxy-D-ribulos-1-ylimino)methylamino]-1-(5-phospho-beta-D-ribosyl)imidazole-4-carboxamide. The protein operates within amino-acid biosynthesis; L-histidine biosynthesis; L-histidine from 5-phospho-alpha-D-ribose 1-diphosphate: step 4/9. In Pseudomonas putida (strain ATCC 47054 / DSM 6125 / CFBP 8728 / NCIMB 11950 / KT2440), this protein is 1-(5-phosphoribosyl)-5-[(5-phosphoribosylamino)methylideneamino] imidazole-4-carboxamide isomerase.